A 510-amino-acid polypeptide reads, in one-letter code: ATP synthase subunit alpha, mitochondrial (510 aa).

171–178 serves as a coordination point for ATP; the sequence is GDRQTGKT.

Belongs to the ATPase alpha/beta chains family. As to quaternary structure, F-type ATPases have 2 components, CF(1) - the catalytic core - and CF(0) - the membrane proton channel. CF(1) has five subunits: alpha(3), beta(3), gamma(1), delta(1), epsilon(1). CF(0) has three main subunits: a, b and c.

Its subcellular location is the mitochondrion. The protein resides in the mitochondrion inner membrane. In terms of biological role, mitochondrial membrane ATP synthase (F(1)F(0) ATP synthase or Complex V) produces ATP from ADP in the presence of a proton gradient across the membrane which is generated by electron transport complexes of the respiratory chain. F-type ATPases consist of two structural domains, F(1) - containing the extramembraneous catalytic core, and F(0) - containing the membrane proton channel, linked together by a central stalk and a peripheral stalk. During catalysis, ATP synthesis in the catalytic domain of F(1) is coupled via a rotary mechanism of the central stalk subunits to proton translocation. Subunits alpha and beta form the catalytic core in F(1). Rotation of the central stalk against the surrounding alpha(3)beta(3) subunits leads to hydrolysis of ATP in three separate catalytic sites on the beta subunits. Subunit alpha does not bear the catalytic high-affinity ATP-binding sites. This is ATP synthase subunit alpha, mitochondrial (ATPA) from Helianthus annuus (Common sunflower).